The chain runs to 172 residues: Putative F-box protein At3g13825 (172 aa).

Residues 1–51 (MTTLSNLSVDLVGEIFSRVPLISLSEVRCTCTTWNTLSWNILSENYVFGKA) enclose the F-box domain.

The sequence is that of Putative F-box protein At3g13825 from Arabidopsis thaliana (Mouse-ear cress).